Consider the following 514-residue polypeptide: Peptide chain release factor 3 (514 aa).

In terms of domain architecture, tr-type G spans 8 to 268 (KKRRTFAIIS…TFLEFAPEPH (261 aa)). GTP is bound by residues 17-24 (SHPDAGKT), 85-89 (DTPGH), and 139-142 (NKLD).

Belongs to the TRAFAC class translation factor GTPase superfamily. Classic translation factor GTPase family. PrfC subfamily.

The protein localises to the cytoplasm. Increases the formation of ribosomal termination complexes and stimulates activities of RF-1 and RF-2. It binds guanine nucleotides and has strong preference for UGA stop codons. It may interact directly with the ribosome. The stimulation of RF-1 and RF-2 is significantly reduced by GTP and GDP, but not by GMP. The protein is Peptide chain release factor 3 of Streptococcus pyogenes serotype M1.